A 235-amino-acid chain; its full sequence is MVDPVEARDRLIVALDLPDVRAAEAMIARLDDSVTFYKIGYQLAYAGGLPLARALKAAGKKVFVDLKLHDIGNTVARGVESLASLGATFITVHAYPQTMKAAVEGRGASKVKILAVTVLTSYDEADLAQAGYRLGVRDLVELRARQAKELGIDGLVCSPEEAAHLRGIVGDGIKLVTPGIRPAGSAAGDQKRIMTPARAIAAGADYLVVGRPVTEAADPKAAADAIVDEIVGATT.

Residues Asp16, Lys38, 65–74 (DLKLHDIGNT), Thr120, Arg181, Gln190, Gly210, and Arg211 contribute to the substrate site. The active-site Proton donor is the Lys67.

It belongs to the OMP decarboxylase family. Type 1 subfamily. As to quaternary structure, homodimer.

The catalysed reaction is orotidine 5'-phosphate + H(+) = UMP + CO2. The protein operates within pyrimidine metabolism; UMP biosynthesis via de novo pathway; UMP from orotate: step 2/2. Functionally, catalyzes the decarboxylation of orotidine 5'-monophosphate (OMP) to uridine 5'-monophosphate (UMP). In Rhodopseudomonas palustris (strain BisA53), this protein is Orotidine 5'-phosphate decarboxylase.